The primary structure comprises 107 residues: Urease subunit beta (107 aa).

It belongs to the urease beta subunit family. Heterotrimer of UreA (gamma), UreB (beta) and UreC (alpha) subunits. Three heterotrimers associate to form the active enzyme.

Its subcellular location is the cytoplasm. The catalysed reaction is urea + 2 H2O + H(+) = hydrogencarbonate + 2 NH4(+). It participates in nitrogen metabolism; urea degradation; CO(2) and NH(3) from urea (urease route): step 1/1. This is Urease subunit beta from Janthinobacterium sp. (strain Marseille) (Minibacterium massiliensis).